We begin with the raw amino-acid sequence, 70 residues long: DNA-directed RNA polymerase subunit omega (70 aa).

This sequence belongs to the RNA polymerase subunit omega family. The RNAP catalytic core consists of 2 alpha, 1 beta, 1 beta' and 1 omega subunit. When a sigma factor is associated with the core the holoenzyme is formed, which can initiate transcription.

The enzyme catalyses RNA(n) + a ribonucleoside 5'-triphosphate = RNA(n+1) + diphosphate. Promotes RNA polymerase assembly. Latches the N- and C-terminal regions of the beta' subunit thereby facilitating its interaction with the beta and alpha subunits. In Staphylococcus epidermidis (strain ATCC 35984 / DSM 28319 / BCRC 17069 / CCUG 31568 / BM 3577 / RP62A), this protein is DNA-directed RNA polymerase subunit omega.